The chain runs to 147 residues: Phospholipase A2-beta (147 aa).

Residues 1-28 form the signal peptide; the sequence is MMFRTSLMRFAAAFFAIVFVVLVGVARS. 6 disulfide bridges follow: Cys31–Cys58, Cys35–Cys64, Cys40–Cys117, Cys51–Cys71, Cys70–Cys95, and Cys77–Cys88. Tyr50, Gly52, and His55 together coordinate Ca(2+). His74 is a catalytic residue. Position 75 (Asp75) interacts with Ca(2+). The Prevents secretion from ER motif lies at 144-147; that stretch reads KTEL.

Belongs to the phospholipase A2 family. Ca(2+) serves as cofactor. As to expression, ubiquitous but expressed at a low level. Detected in vascular tissues and in the guard cells. Predominantly detected in pollen.

The protein localises to the secreted. The protein resides in the endoplasmic reticulum. It carries out the reaction a 1,2-diacyl-sn-glycero-3-phosphocholine + H2O = a 1-acyl-sn-glycero-3-phosphocholine + a fatty acid + H(+). Its activity is regulated as follows. Inhibited by aristolochic acid. Its function is as follows. PA2 catalyzes the calcium-dependent hydrolysis of the 2-acyl groups in 3-sn-phosphoglycerides. Releases lysophospholipids (LPLs) and free fatty acids (FFAs) from membrane phospholipids in response to hormones and other external stimuli. Regulates the process of cell elongation and plays important roles in shoot gravitropism by mediating auxin-induced cell elongation. Involved in stomatal opening in response to light. Plays a role in pollen development and germination and tube growth. The sequence is that of Phospholipase A2-beta (PLA2-BETA) from Arabidopsis thaliana (Mouse-ear cress).